Here is a 212-residue protein sequence, read N- to C-terminus: Uridine kinase (212 aa).

12 to 19 (GGSGGGKT) contacts ATP.

It belongs to the uridine kinase family.

Its subcellular location is the cytoplasm. The enzyme catalyses uridine + ATP = UMP + ADP + H(+). The catalysed reaction is cytidine + ATP = CMP + ADP + H(+). It participates in pyrimidine metabolism; CTP biosynthesis via salvage pathway; CTP from cytidine: step 1/3. Its pathway is pyrimidine metabolism; UMP biosynthesis via salvage pathway; UMP from uridine: step 1/1. This is Uridine kinase from Streptococcus pneumoniae serotype 2 (strain D39 / NCTC 7466).